Reading from the N-terminus, the 131-residue chain is Fumarate reductase subunit C (131 aa).

Helical transmembrane passes span 30 to 50 (EGTA…LFAL), 57 to 77 (WAGF…LITL), and 109 to 129 (IIKS…FVAL).

Belongs to the FrdC family. As to quaternary structure, part of an enzyme complex containing four subunits: a flavoprotein (FrdA), an iron-sulfur protein (FrdB), and two hydrophobic anchor proteins (FrdC and FrdD).

It is found in the cell inner membrane. Two distinct, membrane-bound, FAD-containing enzymes are responsible for the catalysis of fumarate and succinate interconversion; fumarate reductase is used in anaerobic growth, and succinate dehydrogenase is used in aerobic growth. Anchors the catalytic components of the fumarate reductase complex to the cell inner membrane, binds quinones. This is Fumarate reductase subunit C from Shigella flexneri.